The following is a 306-amino-acid chain: Porphobilinogen deaminase (306 aa).

The residue at position 241 (cysteine 241) is an S-(dipyrrolylmethanemethyl)cysteine.

Belongs to the HMBS family. Monomer. Dipyrromethane is required as a cofactor.

It catalyses the reaction 4 porphobilinogen + H2O = hydroxymethylbilane + 4 NH4(+). It participates in porphyrin-containing compound metabolism; protoporphyrin-IX biosynthesis; coproporphyrinogen-III from 5-aminolevulinate: step 2/4. Functionally, tetrapolymerization of the monopyrrole PBG into the hydroxymethylbilane pre-uroporphyrinogen in several discrete steps. The protein is Porphobilinogen deaminase of Acidithiobacillus ferrooxidans (strain ATCC 23270 / DSM 14882 / CIP 104768 / NCIMB 8455) (Ferrobacillus ferrooxidans (strain ATCC 23270)).